The following is a 284-amino-acid chain: Bifunctional protein FolD (284 aa).

NADP(+)-binding positions include 165 to 167, S190, and I231; that span reads GRS.

This sequence belongs to the tetrahydrofolate dehydrogenase/cyclohydrolase family. Homodimer.

It catalyses the reaction (6R)-5,10-methylene-5,6,7,8-tetrahydrofolate + NADP(+) = (6R)-5,10-methenyltetrahydrofolate + NADPH. It carries out the reaction (6R)-5,10-methenyltetrahydrofolate + H2O = (6R)-10-formyltetrahydrofolate + H(+). Its pathway is one-carbon metabolism; tetrahydrofolate interconversion. Catalyzes the oxidation of 5,10-methylenetetrahydrofolate to 5,10-methenyltetrahydrofolate and then the hydrolysis of 5,10-methenyltetrahydrofolate to 10-formyltetrahydrofolate. The sequence is that of Bifunctional protein FolD from Streptococcus thermophilus (strain ATCC BAA-491 / LMD-9).